The chain runs to 514 residues: Developmental and secondary metabolism regulator veA (514 aa).

The region spanning Asn26–Arg218 is the Velvet domain. A Nuclear localization signal motif is present at residues Glu40–Cys45. The tract at residues Arg219–Gln463 is disordered. The span at Ala228–Arg243 shows a compositional bias: basic and acidic residues. A compositionally biased stretch (low complexity) spans Ser256–Ser267. Polar residues predominate over residues Ser386 to Pro396. Residues Lys411–Cys448 form a PEST region. A compositionally biased stretch (low complexity) spans Ser412–Ser423.

The protein belongs to the velvet family. VeA subfamily. Component of the heterotrimeric velvet complex composed of laeA, veA and velB; VeA acting as a bridging protein between laeA and velB.

The protein localises to the nucleus. It is found in the cytoplasm. Functionally, component of the velvet transcription factor complex that controls sexual/asexual developmental ratio in response to light, promoting sexual development in the darkness while stimulating asexual sporulation under illumination. The velvet complex hat acts as a global regulator for secondary metabolite gene expression. Controls the expression of the cephalosporin C gene cluster. Regulates hyphal fragmentation. This Hapsidospora chrysogenum (strain ATCC 11550 / CBS 779.69 / DSM 880 / IAM 14645 / JCM 23072 / IMI 49137) (Acremonium chrysogenum) protein is Developmental and secondary metabolism regulator veA.